We begin with the raw amino-acid sequence, 296 residues long: Nucleotide-binding protein str0831 (296 aa).

ATP is bound at residue 13 to 20 (GMSGAGKT). 63–66 (DMRS) is a binding site for GTP.

It belongs to the RapZ-like family.

Functionally, displays ATPase and GTPase activities. This chain is Nucleotide-binding protein str0831, found in Streptococcus thermophilus (strain CNRZ 1066).